The following is a 674-amino-acid chain: Penicillin-binding protein activator LpoA (674 aa).

The signal sequence occupies residues 1–31 (MLSSTFVRTKAGRSKPVRLTAVIAAALFLAG). Residue C32 is the site of N-palmitoyl cysteine attachment. C32 carries S-diacylglycerol cysteine lipidation. The tract at residues 291 to 349 (GVTPSTPVQQQQPASVPEQAAQPASTDPNANGAVSTSAPDAAPVTAAQPSAPSTAPITP) is disordered. Over residues 292–315 (VTPSTPVQQQQPASVPEQAAQPAS) the composition is skewed to low complexity. Residues 316 to 328 (TDPNANGAVSTSA) are compositionally biased toward polar residues. The span at 331 to 349 (AAPVTAAQPSAPSTAPITP) shows a compositional bias: low complexity.

The protein belongs to the LpoA family. Interacts with PBP1a.

The protein localises to the cell outer membrane. Functionally, regulator of peptidoglycan synthesis that is essential for the function of penicillin-binding protein 1A (PBP1a). This chain is Penicillin-binding protein activator LpoA, found in Serratia proteamaculans (strain 568).